A 245-amino-acid chain; its full sequence is 1-(5-phosphoribosyl)-5-[(5-phosphoribosylamino)methylideneamino] imidazole-4-carboxamide isomerase (245 aa).

The active-site Proton acceptor is aspartate 7. Aspartate 129 serves as the catalytic Proton donor.

This sequence belongs to the HisA/HisF family.

It localises to the cytoplasm. The enzyme catalyses 1-(5-phospho-beta-D-ribosyl)-5-[(5-phospho-beta-D-ribosylamino)methylideneamino]imidazole-4-carboxamide = 5-[(5-phospho-1-deoxy-D-ribulos-1-ylimino)methylamino]-1-(5-phospho-beta-D-ribosyl)imidazole-4-carboxamide. It functions in the pathway amino-acid biosynthesis; L-histidine biosynthesis; L-histidine from 5-phospho-alpha-D-ribose 1-diphosphate: step 4/9. In Vibrio vulnificus (strain CMCP6), this protein is 1-(5-phosphoribosyl)-5-[(5-phosphoribosylamino)methylideneamino] imidazole-4-carboxamide isomerase.